We begin with the raw amino-acid sequence, 323 residues long: GMP reductase (323 aa).

Cys174 serves as the catalytic Thioimidate intermediate. An NADP(+)-binding site is contributed by 203-226 (IIADGGIRHNGDIAKSVRFGASMV).

This sequence belongs to the IMPDH/GMPR family. GuaC type 2 subfamily.

It catalyses the reaction IMP + NH4(+) + NADP(+) = GMP + NADPH + 2 H(+). Catalyzes the irreversible NADPH-dependent deamination of GMP to IMP. It functions in the conversion of nucleobase, nucleoside and nucleotide derivatives of G to A nucleotides, and in maintaining the intracellular balance of A and G nucleotides. The protein is GMP reductase of Oenococcus oeni (strain ATCC BAA-331 / PSU-1).